Consider the following 152-residue polypeptide: MSELEIRSNFRWPSCALSNFAQWPFVMDGIQFGGLEGFLQGCKVKNVEQQRRIFGLSGLAAQQAGRSYARAQDRGTLFWLGVPFSRYSPAWKELYTNAYFEAAIQNKGFRDALQASKGKVLKHSIASGLTKDDTILTEAEFIDVLNLLRDSL.

This is an uncharacterized protein from Escherichia coli (Bacteriophage T4).